The primary structure comprises 1174 residues: MNATDAESRKPENKPSSESSSSGSTSGSSDGEVSSKTYFKNNKSKVLSGQREVVLEVVRDLSYTICKEAEEKLVERFPRKDGSNEMLPKEDSINTNHNYTTDSDEHPVELTTKTEECKNTEKTKKKSFVRALSKDKQLSAYRSRSRSTRLSYSGHISRTHSVEKSLSRYKKSVLRNRRTSFGHGRDSSTTKRSVSRDKDNRLRRRIGSSRSHTRSHSRFRRSEKKLPSRSPRRIRSQERRHERRRSMSSDYERIALRRSEPIKRRDKDEFFKNNKKVSGDIKKGKGNDNGTVAELEAKITERQRKSLDILTSRTGGACLTPDKLRMIQAEITDKSSAAYQSIAREALKKYIHGYINKVNVDSVAVITRKLLKDNIVRGRGVLCHSIIQAQATSPKFTHVYAAMVAIINSKFPNIGELLLKRLVIQFKRAFGCNDKTVCLTSSHFIAHLVNQRVAHEILALEILTLLIESPTDDNVEVAITFLKECGMKLTEVSSDRVGGIFELLKNILHQGKLDKRVQYMIKVLFQVRRDGFKDHQSIIESLELVEEYAQFTHLLLLEDVTYPKDILNEFKFDDQYETNEEKYKALSKNILGSHASDSDGSFGSGSNSETALSDCDKGKNEVNDKYTSGDIIDETKPNLIALRRTIYLTLNSCLDYEECAQKLMKMQLKTCQQNEFCQILLDCCAEQRTYEKFYGLLTHRICKMNKSFIEPFKEIFKDICQTTHCLDTNRLRNISKFFAHLLFTDAISWDVLDCIKLTEDEAITSRCIFIKSFFQELVEYMGLYHFNKKLKTEVLAGTLAGLFPKDNPRNIRFSINFFTSIGLGGITNELCQLLKIAPKSAPSSSSSSSLSSELSAPSDDDSSSDSENKKKHKGKNKKMTKKKNPSKKKEETKKIVGKNKIAAKNKTIKRRTDKDNSSSKDNFLKSESSSNESISLDSLSSELFAPSSYSSSESSNDSESKEKHKGKNKKMTKKKNPSNKREKTKKKLSKNKKAPNKNTKKRMTEKDISSSESSISESKSLNCSASNQNENEKRKKRVTSKSRTKRVKMFKQCQWVDADNQRDIKRKKRAEYRYEPLVYRKRNEEYLKKGGPNCRKDNYGNRQNHEISQRHDSEIKRRREERKKRHHEKNHSREYKRSKLGPCQREYFLYMCCQFYYPCTFQCLCQNCHFTFYS.

The segment covering 1–15 (MNATDAESRKPENKP) has biased composition (basic and acidic residues). Disordered stretches follow at residues 1-51 (MNAT…SGQR), 79-109 (RKDG…HPVE), and 136-259 (KQLS…LRRS). A compositionally biased stretch (low complexity) spans 16 to 35 (SSESSSSGSTSGSSDGEVSS). A compositionally biased stretch (polar residues) spans 36-47 (KTYFKNNKSKVL). The span at 79-92 (RKDGSNEMLPKEDS) shows a compositional bias: basic and acidic residues. Over residues 138-153 (LSAYRSRSRSTRLSYS) the composition is skewed to low complexity. Residues 167 to 180 (SRYKKSVLRNRRTS) are compositionally biased toward basic residues. Residues 183–200 (HGRDSSTTKRSVSRDKDN) show a composition bias toward basic and acidic residues. Basic residues predominate over residues 201–223 (RLRRRIGSSRSHTRSHSRFRRSE). Basic and acidic residues predominate over residues 235–259 (RSQERRHERRRSMSSDYERIALRRS). The 184-residue stretch at 348–531 (KKYIHGYINK…KVLFQVRRDG (184 aa)) folds into the MIF4G domain. The span at 597-608 (DSDGSFGSGSNS) shows a compositional bias: low complexity. Positions 597 to 616 (DSDGSFGSGSNSETALSDCD) are disordered. An MI domain is found at 641–757 (ALRRTIYLTL…SWDVLDCIKL (117 aa)). The segment covering 840-857 (SAPSSSSSSSLSSELSAP) has biased composition (low complexity). Disordered stretches follow at residues 840-1045 (SAPS…SRTK) and 1089-1135 (KGGP…SREY). 2 stretches are compositionally biased toward basic residues: residues 869–886 (KKKH…KNPS) and 895–909 (IVGK…KTIK). Positions 910 to 924 (RRTDKDNSSSKDNFL) are enriched in basic and acidic residues. Low complexity predominate over residues 926–957 (SESSSNESISLDSLSSELFAPSSYSSSESSND). Positions 963-1001 (KHKGKNKKMTKKKNPSNKREKTKKKLSKNKKAPNKNTKK) are enriched in basic residues. The span at 1010-1020 (SSESSISESKS) shows a compositional bias: low complexity. Positions 1034-1045 (RKKRVTSKSRTK) are enriched in basic residues. A compositionally biased stretch (basic and acidic residues) spans 1089 to 1118 (KGGPNCRKDNYGNRQNHEISQRHDSEIKRR). A compositionally biased stretch (basic residues) spans 1119–1130 (REERKKRHHEKN).

The protein belongs to the CWC22 family. In terms of assembly, component of the spliceosome C complex.

It is found in the nucleus speckle. Male determiner protein (M-factor) that controls male somatic sexual differentiation. Acts as a dominant factor that regulates the mRNA splicing of transformer (tra) and doublesex (dsx) transcripts and promotes expression of male splice forms of tra and dsx. Probably acts as a component of the spliceosome C complex required for mRNA splicing factor and exon-junction complex (EJC) assembly. Hinders eIF4AIII from non-specifically binding RNA and escorts it to the splicing machinery to promote EJC assembly on mature mRNAs. The polypeptide is Male determiner protein Mdmd(Y) (Musca domestica (House fly)).